The following is a 225-amino-acid chain: Sodium-dependent neutral amino acid transporter SLC6A17 (225 aa).

The next 3 membrane-spanning stretches (helical) occupy residues 1–8 (NVWRFPYL), 16–35 (AYLVPYLVLLIIIGIPLFFL), and 60–80 (GIGFSSCIVCLFVGLYYNVII). The Extracellular segment spans residues 81 to 143 (GWSIFYFFKS…NSISESGGLN (63 aa)). Asn-105 is a glycosylation site (N-linked (GlcNAc...) asparagine). 3 consecutive transmembrane segments (helical) span residues 144–162 (WKMTLCLLVAWRIVGMAVV), 171–188 (VMYFSSLFPYVVLACFLV), and 224–225 (IF).

It belongs to the sodium:neurotransmitter symporter (SNF) (TC 2.A.22) family.

Its subcellular location is the cytoplasmic vesicle. The protein resides in the secretory vesicle. It localises to the synaptic vesicle membrane. It is found in the postsynapse. The protein localises to the presynapse. It catalyses the reaction L-proline(in) + Na(+)(in) = L-proline(out) + Na(+)(out). It carries out the reaction L-leucine(in) + Na(+)(in) = L-leucine(out) + Na(+)(out). The catalysed reaction is glycine(in) + Na(+)(in) = glycine(out) + Na(+)(out). The enzyme catalyses L-alanine(in) + Na(+)(in) = L-alanine(out) + Na(+)(out). It catalyses the reaction L-glutamine(in) + Na(+)(in) = L-glutamine(out) + Na(+)(out). Synaptic vesicle transporter with apparent selectivity for neutral amino acids. The transport is sodium-coupled but chloride-independent, likely driven by the proton electrochemical gradient generated by vacuolar H(+)-ATPase in an overall electrogenic mechanism. May contribute to the synaptic uptake of neurotransmitter precursors in a process coupled in part to vesicle exocytosis. This chain is Sodium-dependent neutral amino acid transporter SLC6A17, found in Bos taurus (Bovine).